The primary structure comprises 633 residues: Breast carcinoma-amplified sequence 1 homolog (633 aa).

Disordered regions lie at residues 1-34 (MGNQ…CVQN) and 57-422 (SSKD…KLFW). Composition is skewed to polar residues over residues 24-34 (KVTSDNECVQN) and 57-68 (SSKDNVATSSPK). Position 127 is a phosphoserine (Ser127). A compositionally biased stretch (polar residues) spans 278–288 (VDTTENSSSIM). Residues 300–318 (TETKKDPEDTKATKADSVC) are compositionally biased toward basic and acidic residues. At Ser328 the chain carries Phosphoserine. Thr330 carries the post-translational modification Phosphothreonine. The span at 359 to 378 (NSPTTSANLKSDKANFTPQE) shows a compositional bias: polar residues. Ser360 bears the Phosphoserine mark. Basic and acidic residues predominate over residues 400–410 (SEGRDSGKEKA). Phosphoserine occurs at positions 425 and 443. Positions 454-633 (ESSLQTVDLS…VSIGPVGKSK (180 aa)) are disordered. Residues 471–481 (TDVKVKEESKP) are compositionally biased toward basic and acidic residues. Positions 510–522 (KDSSCQTSNSVEK) are enriched in polar residues. Position 523 is a phosphothreonine (Thr523). Ser525 bears the Phosphoserine mark. Basic and acidic residues predominate over residues 537–555 (KNKETSSSKDKKSVDKKSA). 2 positions are modified to phosphoserine: Ser601 and Ser615. The tract at residues 614–633 (MSDAQVQTDPVSIGPVGKSK) is interacts with DYNLL1 AND DYNLL2.

As to quaternary structure, homodimer. Interacts with DYNLL1 and DYNLL2. Highly expressed in the brain and, more specifically, in oligodendrocytes. Expressed in the Schwann cells (at protein level).

It is found in the cytoplasm. Required for myelination. This Mus musculus (Mouse) protein is Breast carcinoma-amplified sequence 1 homolog (Bcas1).